Reading from the N-terminus, the 958-residue chain is Exosome complex exonuclease RRP44 (958 aa).

Position 1 is an N-acetylmethionine (M1). Position 18 is an N6-acetyllysine (K18). Residues 64 to 182 (HYLLPDTNVL…FITNDRRNKE (119 aa)) form the PINc domain. The residue at position 215 (S215) is a Phosphoserine. The region spanning 227-319 (IFSEHLPLSK…LHDEGQNEED (93 aa)) is the CSD1 domain. Residues 372-438 (LFTPADKRIP…ETEVLLLEHD (67 aa)) form the CSD2 domain. Residues 467–792 (REDLRHLCIC…ADVIVHRLLA (326 aa)) form the RNB domain. A disordered region spans residues 938–958 (PTDTSNMDLNGPKKKKMKLGK). The span at 949–958 (PKKKKMKLGK) shows a compositional bias: basic residues.

It belongs to the RNR ribonuclease family. As to quaternary structure, component of the RNA exosome complex; within the complex interacts with EXOSC4, EXOSC7 and EXOSC9 of the exosome core complex (Exo-9). The catalytically inactive RNA exosome core complex (Exo-9) associates with the catalytic subunit EXOSC10/RRP6. Exo-9 may associate with DIS3 to form the nucleolar exosome complex, or DIS3L to form the cytoplasmic exosome complex. Exo-9 is formed by a hexameric base ring consisting of the heterodimers EXOSC4-EXOSC9, EXOSC5-EXOSC8 and EXOSC6-EXOSC7, and a cap ring consisting of EXOSC1, EXOSC2 and EXOSC3; DIS3 associates with the base ring of Exo-9. The RNA exosome complex associates with cofactors C1D/RRP47, MPHOSPH6/MPP6 and MTREX/MTR4. Interacts with DHX34; the interaction is RNA-independent. Mg(2+) is required as a cofactor. Mn(2+) serves as cofactor. As to expression, widely expressed.

It localises to the cytoplasm. It is found in the nucleus. The protein resides in the nucleolus. The protein localises to the nucleoplasm. Putative catalytic component of the RNA exosome complex which has 3'-&gt;5' exoribonuclease activity and participates in a multitude of cellular RNA processing and degradation events. In the nucleus, the RNA exosome complex is involved in proper maturation of stable RNA species such as rRNA, snRNA and snoRNA, in the elimination of RNA processing by-products and non-coding 'pervasive' transcripts, such as antisense RNA species and promoter-upstream transcripts (PROMPTs), and of mRNAs with processing defects, thereby limiting or excluding their export to the cytoplasm. The RNA exosome may be involved in Ig class switch recombination (CSR) and/or Ig variable region somatic hypermutation (SHM) by targeting AICDA deamination activity to transcribed dsDNA substrates. In the cytoplasm, the RNA exosome complex is involved in general mRNA turnover and specifically degrades inherently unstable mRNAs containing AU-rich elements (AREs) within their 3' untranslated regions, and in RNA surveillance pathways, preventing translation of aberrant mRNAs. It seems to be involved in degradation of histone mRNA. DIS3 has both 3'-5' exonuclease and endonuclease activities. The chain is Exosome complex exonuclease RRP44 (DIS3) from Homo sapiens (Human).